Reading from the N-terminus, the 238-residue chain is RNA pyrophosphohydrolase (238 aa).

The Nudix hydrolase domain maps to 6 to 149 (GFRPNVGIIL…KREVYQMALS (144 aa)). Residues 38–59 (GGIKYGETPEQAMYRELHEEVG) carry the Nudix box motif. The segment at 161-238 (APLSPYGRGG…PDDTPSKDSL (78 aa)) is disordered. Positions 171-181 (PHRERDGRDNR) are enriched in basic and acidic residues. Residues 188 to 199 (RNDQNTRGQRQP) are compositionally biased toward polar residues. A compositionally biased stretch (low complexity) spans 204-217 (VTTSTVIVETVITS).

The protein belongs to the Nudix hydrolase family. RppH subfamily. The cofactor is a divalent metal cation.

Functionally, accelerates the degradation of transcripts by removing pyrophosphate from the 5'-end of triphosphorylated RNA, leading to a more labile monophosphorylated state that can stimulate subsequent ribonuclease cleavage. The polypeptide is RNA pyrophosphohydrolase (Ralstonia nicotianae (strain ATCC BAA-1114 / GMI1000) (Ralstonia solanacearum)).